The following is a 348-amino-acid chain: MDKFRMIFQFLQSNQESFMNGICGIMALASAQMYSAFDFNCPCLPGYNVVYSLGILLTPPLVLFLLGLVMNNNISMLAEEWKRPAGRRAKDPAVLRYMFCSMAQRALIAPVVWVAVTLLDGKCFLCAFCTAVPVATLGNGSLVPGLPAPELARLLARVPCPEIYDGNWLLAREVAVRYLRCISQALGWSFVLLTTLLAFVVRSVRPCFTQVAFLKSKYWSHYIDIERKLFDETCTEHAKAFAKVCIQQFFEAMNHDLELGHTHGVLATATATATATEAVQSPSDRTEEEREKLRGITDQGTMNRLLTSWHKCKPPLRLGQEAPLMSNGWAGGEPRPPRKEVATYFSKV.

At 1-20 (MDKFRMIFQFLQSNQESFMN) the chain is on the cytoplasmic side. Positions 9–36 (QFLQSNQESFMNGICGIMALASAQMYSA) are central pore. Residues 21–36 (GICGIMALASAQMYSA) traverse the membrane as a helical segment. Residues 37-48 (FDFNCPCLPGYN) are Extracellular-facing. Disulfide bonds link C41–C126 and C43–C160. The helical transmembrane segment at 49-71 (VVYSLGILLTPPLVLFLLGLVMN) threads the bilayer. The tract at residues 62–69 (VLFLLGLV) is phospholipid-binding. Over 72–98 (NNISMLAEEWKRPAGRRAKDPAVLRYM) the chain is Cytoplasmic. Residues 99–124 (FCSMAQRALIAPVVWVAVTLLDGKCF) form a helical membrane-spanning segment. C100 carries S-palmitoyl cysteine lipidation. Residues 104–116 (QRALIAPVVWVAV) form a phospholipid-binding region. Residues 125–179 (LCAFCTAVPVATLGNGSLVPGLPAPELARLLARVPCPEIYDGNWLLAREVAVRYL) are Extracellular-facing. Residue N139 is glycosylated (N-linked (GlcNAc...) asparagine). Residues 180–205 (RCISQALGWSFVLLTTLLAFVVRSVR) traverse the membrane as a helical segment. The phospholipid-binding stretch occupies residues 191–201 (VLLTTLLAFVV). Topologically, residues 206–348 (PCFTQVAFLK…KEVATYFSKV (143 aa)) are cytoplasmic. C207 carries S-palmitoyl cysteine lipidation. The disordered stretch occupies residues 324–348 (LMSNGWAGGEPRPPRKEVATYFSKV).

This sequence belongs to the CALHM family. As to quaternary structure, oligomerizes to form hexamers and octamers. Does not form gap junctions. Associates with CALHM3 as a pore-forming subunit in a hetero-hexameric channel complex. N-glycosylated. Assembly with CALHM3 is associated with N-glycan remodeling and formation of hybrid complex- and high mannose-type glycochains. This N-glycan processing regulates channel trafficking and gating kinetics. Post-translationally, palmitoylated by ZDHHC3, ZDHHC20 and possibly ZDHHC7. Palmitoylation regulates voltage-dependent gating of the channel by shifting it toward more depolarized potentials. In terms of tissue distribution, specifically expressed in type II taste bud cells (at protein level). Not expressed in brain.

The protein resides in the cell membrane. The protein localises to the endoplasmic reticulum membrane. Its subcellular location is the basolateral cell membrane. It catalyses the reaction ATP(in) = ATP(out). The enzyme catalyses Ca(2+)(in) = Ca(2+)(out). It carries out the reaction Mg(2+)(in) = Mg(2+)(out). The catalysed reaction is Na(+)(in) = Na(+)(out). It catalyses the reaction K(+)(in) = K(+)(out). The enzyme catalyses Li(+)(in) = Li(+)(out). It carries out the reaction Rb(+)(in) = Rb(+)(out). The catalysed reaction is Cs(+)(in) = Cs(+)(out). It catalyses the reaction chloride(in) = chloride(out). With respect to regulation, regulated by membrane voltage and extracellular Ca(2+). Inhibited by Gd(3+), ruthenium red, and Zn(2+) and partially inhibited by 2-aminoethoxydiphenyl borate. In terms of biological role, pore-forming subunit of gustatory voltage-gated ion channels required for sensory perception of sweet, bitter and umami tastes. With CALHM3 forms a fast-activating voltage-gated ATP-release channel in type II taste bud cells, ATP acting as a neurotransmitter to activate afferent neural gustatory pathways. Acts both as a voltage-gated and calcium-activated ion channel: mediates neuronal excitability in response to membrane depolarization and low extracellular Ca(2+) concentration. Has poor ion selectivity and forms a wide pore (around 14 Angstroms) that mediates permeation of small ions including Ca(2+), Na(+), K(+) and Cl(-), as well as larger ions such as ATP(4-). Mediates Ca(2+) influx and downstream activation of the ERK1 and ERK2 cascade in neurons. Triggers endoplasmic reticulum stress by reducing the calcium content of the endoplasmic reticulum. May indirectly control amyloid precursor protein (APP) proteolysis and aggregated amyloid-beta (Abeta) peptides levels in a Ca(2+) dependent manner. In Mus musculus (Mouse), this protein is Calcium homeostasis modulator protein 1.